Consider the following 149-residue polypeptide: Small ribosomal subunit protein uS9 (149 aa).

This sequence belongs to the universal ribosomal protein uS9 family.

It is found in the cytoplasm. This Oryza sativa subsp. indica (Rice) protein is Small ribosomal subunit protein uS9 (RPS16A).